The sequence spans 178 residues: Photosystem I assembly protein Ycf4 (178 aa).

The next 2 helical transmembrane spans lie at 19 to 39 (ILVA…SLSS) and 61 to 81 (LVMG…WAVI).

It belongs to the Ycf4 family.

It is found in the cellular thylakoid membrane. Its function is as follows. Seems to be required for the assembly of the photosystem I complex. This chain is Photosystem I assembly protein Ycf4, found in Synechococcus sp. (strain WH7803).